The chain runs to 358 residues: Isopentenyl-diphosphate delta-isomerase (358 aa).

Substrate is bound at residue 12-13; that stretch reads RK. Residues 69-71, Ser-99, and Asn-128 contribute to the FMN site; that span reads AMT. Gln-158 is a substrate binding site. Glu-159 provides a ligand contact to Mg(2+). FMN is bound by residues Lys-190, Thr-220, 267–269, and 288–289; these read GIR and AG.

Belongs to the IPP isomerase type 2 family. Homooctamer. Dimer of tetramers. FMN serves as cofactor. The cofactor is NADPH. Mg(2+) is required as a cofactor.

Its subcellular location is the cytoplasm. The enzyme catalyses isopentenyl diphosphate = dimethylallyl diphosphate. Functionally, involved in the biosynthesis of isoprenoids. Catalyzes the 1,3-allylic rearrangement of the homoallylic substrate isopentenyl (IPP) to its allylic isomer, dimethylallyl diphosphate (DMAPP). The sequence is that of Isopentenyl-diphosphate delta-isomerase from Listeria innocua serovar 6a (strain ATCC BAA-680 / CLIP 11262).